The chain runs to 188 residues: Elongation factor P (188 aa).

It belongs to the elongation factor P family.

The protein resides in the cytoplasm. Its pathway is protein biosynthesis; polypeptide chain elongation. In terms of biological role, involved in peptide bond synthesis. Stimulates efficient translation and peptide-bond synthesis on native or reconstituted 70S ribosomes in vitro. Probably functions indirectly by altering the affinity of the ribosome for aminoacyl-tRNA, thus increasing their reactivity as acceptors for peptidyl transferase. In Sulfurovum sp. (strain NBC37-1), this protein is Elongation factor P.